Consider the following 190-residue polypeptide: Bifunctional protein PyrR (190 aa).

The PRPP-binding signature appears at 107–119 (IILVDDVLYSGRT).

Belongs to the purine/pyrimidine phosphoribosyltransferase family. PyrR subfamily.

It carries out the reaction UMP + diphosphate = 5-phospho-alpha-D-ribose 1-diphosphate + uracil. Its function is as follows. Regulates the transcription of the pyrimidine nucleotide (pyr) operon in response to exogenous pyrimidines. Functionally, also displays a weak uracil phosphoribosyltransferase activity which is not physiologically significant. This is Bifunctional protein PyrR from Corynebacterium diphtheriae (strain ATCC 700971 / NCTC 13129 / Biotype gravis).